We begin with the raw amino-acid sequence, 251 residues long: 3-deoxy-manno-octulosonate cytidylyltransferase (251 aa).

This sequence belongs to the KdsB family.

The protein localises to the cytoplasm. The catalysed reaction is 3-deoxy-alpha-D-manno-oct-2-ulosonate + CTP = CMP-3-deoxy-beta-D-manno-octulosonate + diphosphate. It participates in nucleotide-sugar biosynthesis; CMP-3-deoxy-D-manno-octulosonate biosynthesis; CMP-3-deoxy-D-manno-octulosonate from 3-deoxy-D-manno-octulosonate and CTP: step 1/1. Its pathway is bacterial outer membrane biogenesis; lipopolysaccharide biosynthesis. Activates KDO (a required 8-carbon sugar) for incorporation into bacterial lipopolysaccharide in Gram-negative bacteria. The polypeptide is 3-deoxy-manno-octulosonate cytidylyltransferase (Rhizobium johnstonii (strain DSM 114642 / LMG 32736 / 3841) (Rhizobium leguminosarum bv. viciae)).